The sequence spans 462 residues: Glycine--tRNA ligase (462 aa).

Residues Arg-94 and Glu-143 each coordinate substrate. Residues 175 to 177, 185 to 190, 259 to 260, and 308 to 311 each bind ATP; these read RNE, FRTCEF, EL, and GLTR. Position 190–194 (190–194) interacts with substrate; sequence FEQME. 304 to 308 is a binding site for substrate; that stretch reads ETSAG.

This sequence belongs to the class-II aminoacyl-tRNA synthetase family. Homodimer.

It is found in the cytoplasm. It catalyses the reaction tRNA(Gly) + glycine + ATP = glycyl-tRNA(Gly) + AMP + diphosphate. In terms of biological role, catalyzes the attachment of glycine to tRNA(Gly). This Treponema pallidum (strain Nichols) protein is Glycine--tRNA ligase.